The primary structure comprises 1353 residues: Adenylate cyclase type 9 (1353 aa).

Disordered stretches follow at residues 1 to 27 and 49 to 71; these read MASP…DSNS and SISS…GGGG. The Cytoplasmic portion of the chain corresponds to 1 to 117; the sequence is MASPPHQQLL…CFPQTQRRFR (117 aa). The segment covering 16-27 has biased composition (polar residues); sequence EVSCDSSGDSNS. A compositionally biased stretch (low complexity) spans 49-66; that stretch reads SISSSCSSSGDSGGVPRR. The helical transmembrane segment at 118 to 138 threads the bilayer; the sequence is YALFYIGFACLLWSIYFAVHM. Residues 139–141 lie on the Extracellular side of the membrane; that stretch reads RSR. The chain crosses the membrane as a helical span at residues 142–162; the sequence is LIVMVAPALCFLLVCVGFFLF. At 163-171 the chain is on the cytoplasmic side; the sequence is TFTKLYARH. A helical membrane pass occupies residues 172–192; sequence YAWTSLALTLLVFALTLAAQF. Residues 193 to 215 are Extracellular-facing; sequence QVLTPVSGRGDSSNLTATARPTD. The N-linked (GlcNAc...) asparagine glycan is linked to asparagine 206. A helical membrane pass occupies residues 216–235; that stretch reads TCLSQVGSFSMCIEVLFLLY. Over 236–241 the chain is Cytoplasmic; that stretch reads TVMHLP. The helical transmembrane segment at 242–259 threads the bilayer; the sequence is LYLSLCLGVAYSVLFETF. Residues 260–280 are Extracellular-facing; it reads GYHFRDEACFPSPGAGALHWE. Residues 281–301 form a helical membrane-spanning segment; the sequence is LLSRGLLHGCIHAIGVHLFVM. The Cytoplasmic segment spans residues 302 to 786; the sequence is SQVRSRSTFL…VKTFASPTFS (485 aa). The tract at residues 349 to 375 is disordered; that stretch reads QGDEESENSVKRHATSSPKNRKKKSSI. Over residues 359–374 the composition is skewed to basic residues; it reads KRHATSSPKNRKKKSS. Positions 394-521 constitute a Guanylate cyclase 1 domain; sequence SILFADIVGF…NDVNLANLME (128 aa). 3 residues coordinate Mg(2+): aspartate 399, isoleucine 400, and aspartate 443. Residues 399–404, 441–443, and arginine 487 each bind ATP; these read DIVGFT and LGD. Serine 610 carries the post-translational modification Phosphoserine. The tract at residues 642–684 is disordered; that stretch reads EAGAEGGAPQNGCQDEHKNSTKASGGPNPKTQNGLLSPPQEEK. A phosphoserine mark is found at serine 688, serine 691, and serine 706. Residues 787-807 traverse the membrane as a helical segment; sequence SLLDVFLSTTVFLTLSTTCFL. The Extracellular portion of the chain corresponds to 808 to 818; sequence KYEAATVPPPP. A helical membrane pass occupies residues 819–839; the sequence is AALAVFSAALLLEVLSLAVSI. The Cytoplasmic segment spans residues 840–867; that stretch reads RMVFFLEDVMACTKRLLEWIAGWLPRHC. Residues 868 to 888 traverse the membrane as a helical segment; that stretch reads IGAILVSLPALAVYSHVTSEY. Over 889-891 the chain is Extracellular; it reads ETN. Residues 892–912 traverse the membrane as a helical segment; sequence IHFPVFTGSAALIAVVHYCNF. Residues 913 to 920 are Cytoplasmic-facing; the sequence is CQLSSWMR. A helical transmembrane segment spans residues 921–941; the sequence is SSLATVVGAGPLLLLYVSLCP. Over 942–975 the chain is Extracellular; that stretch reads DSSVLTSPLDAVQNFSSERNPCNSSVPRDLRRPA. Residues asparagine 955 and asparagine 964 are each glycosylated (N-linked (GlcNAc...) asparagine). Residues 976–996 traverse the membrane as a helical segment; it reads SLIGQEVVLVFFLLLLLVWFL. At 997–1353 the chain is on the cytoplasmic side; sequence NREFEVSYRL…LTKLNVSKSV (357 aa). Residues 1058-1198 enclose the Guanylate cyclase 2 domain; sequence GVIFASIVNF…DTVNIASRMD (141 aa). Residues lysine 1108, 1185 to 1187, 1192 to 1196, and lysine 1232 contribute to the ATP site; these read DIW and NIASR. Phosphoserine is present on residues serine 1257, serine 1259, serine 1295, and serine 1307. Over residues 1292–1301 the composition is skewed to polar residues; it reads SLGSDSSTQA. The tract at residues 1292–1326 is disordered; sequence SLGSDSSTQAKDAHLSPKRPWKEPVKAEERGRFGK. The span at 1302 to 1326 shows a compositional bias: basic and acidic residues; it reads KDAHLSPKRPWKEPVKAEERGRFGK.

It belongs to the adenylyl cyclase class-4/guanylyl cyclase family. Mg(2+) is required as a cofactor. Mn(2+) serves as cofactor. Detected in skeletal muscle, pancreas, lung, heart, kidney, liver, brain and placenta. Expressed in multiple cells of the lung, with expression highest in airway smooth muscle.

It localises to the cell membrane. It catalyses the reaction ATP = 3',5'-cyclic AMP + diphosphate. With respect to regulation, insensitive to calcium/calmodulin, forskolin and somatostatin. Stimulated by beta-adrenergic receptor activation. Activity is down-regulated by calcium/calcineurin. Its function is as follows. Adenylyl cyclase that catalyzes the formation of the signaling molecule cAMP in response to activation of G protein-coupled receptors. Contributes to signaling cascades activated by CRH (corticotropin-releasing factor), corticosteroids and beta-adrenergic receptors. In Homo sapiens (Human), this protein is Adenylate cyclase type 9 (ADCY9).